Consider the following 250-residue polypeptide: tRNA (guanine-N(1)-)-methyltransferase (250 aa).

Residues G113 and 133-138 (IGDYVL) each bind S-adenosyl-L-methionine.

This sequence belongs to the RNA methyltransferase TrmD family. In terms of assembly, homodimer.

The protein localises to the cytoplasm. The enzyme catalyses guanosine(37) in tRNA + S-adenosyl-L-methionine = N(1)-methylguanosine(37) in tRNA + S-adenosyl-L-homocysteine + H(+). Functionally, specifically methylates guanosine-37 in various tRNAs. This chain is tRNA (guanine-N(1)-)-methyltransferase, found in Shewanella amazonensis (strain ATCC BAA-1098 / SB2B).